The primary structure comprises 262 residues: Acyl-[acyl-carrier-protein]--UDP-N-acetylglucosamine O-acyltransferase (262 aa).

Belongs to the transferase hexapeptide repeat family. LpxA subfamily. In terms of assembly, homotrimer.

The protein resides in the cytoplasm. It catalyses the reaction a (3R)-hydroxyacyl-[ACP] + UDP-N-acetyl-alpha-D-glucosamine = a UDP-3-O-[(3R)-3-hydroxyacyl]-N-acetyl-alpha-D-glucosamine + holo-[ACP]. Its pathway is glycolipid biosynthesis; lipid IV(A) biosynthesis; lipid IV(A) from (3R)-3-hydroxytetradecanoyl-[acyl-carrier-protein] and UDP-N-acetyl-alpha-D-glucosamine: step 1/6. Functionally, involved in the biosynthesis of lipid A, a phosphorylated glycolipid that anchors the lipopolysaccharide to the outer membrane of the cell. This Shigella boydii serotype 18 (strain CDC 3083-94 / BS512) protein is Acyl-[acyl-carrier-protein]--UDP-N-acetylglucosamine O-acyltransferase.